Reading from the N-terminus, the 111-residue chain is Regulator of ribonuclease activity B (111 aa).

This sequence belongs to the RraB family. Interacts with the C-terminal region of Rne.

The protein resides in the cytoplasm. Functionally, globally modulates RNA abundance by binding to RNase E (Rne) and regulating its endonucleolytic activity. Can modulate Rne action in a substrate-dependent manner by altering the composition of the degradosome. The polypeptide is Regulator of ribonuclease activity B (Pseudoalteromonas translucida (strain TAC 125)).